A 248-amino-acid chain; its full sequence is Probable capsular polysaccharide biosynthesis protein YwqC (248 aa).

The next 2 membrane-spanning stretches (helical) occupy residues 18–38 (ILLIMIVTAAATAAGGLISFF) and 174–194 (LLNIAIAFAAGLAGSIGLAFL).

Belongs to the CpsC/CapA family. In terms of processing, not phosphorylated in vitro by YwqD.

The protein resides in the cell membrane. Its pathway is capsule biogenesis; capsule polysaccharide biosynthesis. Required for YwqD kinase activity. May bring YwqD and its substrates into contact. Probably involved in the regulation of capsular polysaccharide biosynthesis. This is Probable capsular polysaccharide biosynthesis protein YwqC (ywqC) from Bacillus subtilis (strain 168).